A 211-amino-acid chain; its full sequence is Thymidylate kinase (211 aa).

Residue 11–18 (GPDGAGKT) participates in ATP binding.

The protein belongs to the thymidylate kinase family.

It carries out the reaction dTMP + ATP = dTDP + ADP. Its function is as follows. Phosphorylation of dTMP to form dTDP in both de novo and salvage pathways of dTTP synthesis. The polypeptide is Thymidylate kinase (Streptococcus pyogenes serotype M49 (strain NZ131)).